The primary structure comprises 262 residues: MSNIHPTALVADGASLHPTVTVGPYAVIGPQAVIGPGCSVGAHCVIEGRTTLGADNRIFPFACLGAAPQDKKYAGEPTQLVIGQRNTIREFCTFNRGTVQDRGLTSIGDDNWIMAYVHIAHDCVVGNQTILANNATLAGHVQVADLAIIGGLTGVHQFVKIGAHAMAGFASRIAQDVPPFMMVDGNPLAVRGLNLEGLRRRGFPAARMAGIKQMYRLLYRQGLTLEAACQAMAELPAAHPQAAADVALMRAFLAACTRGIVR.

This sequence belongs to the transferase hexapeptide repeat family. LpxA subfamily. In terms of assembly, homotrimer.

It is found in the cytoplasm. The enzyme catalyses a (3R)-hydroxyacyl-[ACP] + UDP-N-acetyl-alpha-D-glucosamine = a UDP-3-O-[(3R)-3-hydroxyacyl]-N-acetyl-alpha-D-glucosamine + holo-[ACP]. Its pathway is glycolipid biosynthesis; lipid IV(A) biosynthesis; lipid IV(A) from (3R)-3-hydroxytetradecanoyl-[acyl-carrier-protein] and UDP-N-acetyl-alpha-D-glucosamine: step 1/6. In terms of biological role, involved in the biosynthesis of lipid A, a phosphorylated glycolipid that anchors the lipopolysaccharide to the outer membrane of the cell. This Verminephrobacter eiseniae (strain EF01-2) protein is Acyl-[acyl-carrier-protein]--UDP-N-acetylglucosamine O-acyltransferase.